Reading from the N-terminus, the 145-residue chain is Toxin Res (145 aa).

The protein belongs to the MbcT/ParT/Res family. As to quaternary structure, homodimer. Forms a complex with cognate antitoxin Xre; the 2 toxin molecules dimerize and each contacts an Xre homodimer. Most Res-Xre contacts are between the antitoxin molecule closest to the toxin.

Its function is as follows. Toxic component of a type II toxin-antitoxin (TA) system. Expression in E.coli inhibits cell growth. In vivo it is probably neutralized by cognate antitoxin Xre; this has not been shown upon expression in E.coli. Probably depletes intracellular NAD(+). The polypeptide is Toxin Res (Pseudomonas putida (strain ATCC 47054 / DSM 6125 / CFBP 8728 / NCIMB 11950 / KT2440)).